Consider the following 2771-residue polypeptide: Teneurin-4 (2771 aa).

Residues 1-22 (MDVKERKPYRSLTRRRDAERRY) are compositionally biased toward basic and acidic residues. Residues 1-45 (MDVKERKPYRSLTRRRDAERRYTSSSADSEEGKGPQKSYSSSETL) are disordered. A Teneurin N-terminal domain is found at 1–341 (MDVKERKPYR…KPSKYCNWKC (341 aa)). The Cytoplasmic segment spans residues 1–345 (MDVKERKPYR…YCNWKCAALS (345 aa)). Ser-124 carries the post-translational modification Phosphoserine. Positions 132–233 (WGRSTRSGRS…PPAGSAQEPT (102 aa)) are disordered. The span at 134 to 155 (RSTRSGRSSCLSSRANSNLTLT) shows a compositional bias: low complexity. Basic and acidic residues predominate over residues 156-166 (DTEHENTETDH). Thr-178 bears the Phosphothreonine mark. The span at 191 to 211 (QHHAASINSLNRGNFTPRSNP) shows a compositional bias: polar residues. A helical membrane pass occupies residues 346–366 (AILISATLVILLAYFVAMHLF). Residues 367–2771 (GLNWHLQPME…FMRQSEMGRR (2405 aa)) are Extracellular-facing. The tract at residues 403-428 (SGGTGLETPDRKGKGAAEGKPSSLFP) is disordered. Basic and acidic residues predominate over residues 410–419 (TPDRKGKGAA). Residue Asn-469 is glycosylated (N-linked (GlcNAc...) asparagine). The disordered stretch occupies residues 509–528 (ARSLEGPQRQSRGPVPPSSH). 8 EGF-like domains span residues 564 to 595 (SVDNCPSNCYGNGDCISGTCHCFLGFLGPDCG), 596 to 626 (RASCPVLCSGNGQYMKGRCLCHSGWKGAECD), 628 to 660 (PTNQCIDVACSSHGTCIMGTCICNPGYKGESCE), 661 to 692 (EVDCMDPTCSSRGVCVRGECHCSVGWGGTNCE), 694 to 727 (PRATCLDQCSGHGTFLPDTGLCNCDPSWTGHDCS), 728 to 759 (IEICAADCGGHGVCVGGTCRCEDGWMGAACDQ), 760 to 789 (RACHPRCAEHGTCRDGKCECSPGWNGEHCT), and 790 to 833 (IAHY…TGCD). Disulfide bonds link Cys-568–Cys-578, Cys-572–Cys-583, Cys-585–Cys-594, Cys-603–Cys-614, Cys-616–Cys-625, Cys-632–Cys-643, Cys-637–Cys-648, Cys-650–Cys-659, Cys-664–Cys-675, Cys-669–Cys-680, Cys-682–Cys-691, Cys-702–Cys-715, Cys-717–Cys-726, Cys-731–Cys-741, Cys-735–Cys-746, Cys-748–Cys-757, Cys-762–Cys-772, Cys-766–Cys-777, Cys-779–Cys-788, Cys-802–Cys-812, Cys-806–Cys-821, and Cys-823–Cys-832. 2 N-linked (GlcNAc...) asparagine glycosylation sites follow: Asn-942 and Asn-1261. 5 NHL repeats span residues 1218-1261 (SCPS…PSGN), 1266-1310 (LEMR…VKST), 1336-1380 (TRCG…NGII), 1395-1446 (LSCD…VAGR), and 1525-1568 (CFSG…IRKN). Residues 1578 to 1597 (YELSSPIDQELYLFDTSGKH) form a YD 1 repeat. Asn-1611 carries N-linked (GlcNAc...) asparagine glycosylation. YD repeat units follow at residues 1614 to 1634 (YTGDGDITHITDNNGNMVNVR), 1677 to 1696 (YHGNSGLLATKSNENGWTTF), and 1697 to 1719 (YEYDSFGRLTNVTFPTGQVSSFR). Asn-1707, Asn-1743, Asn-1801, and Asn-1886 each carry an N-linked (GlcNAc...) asparagine glycan. YD repeat units follow at residues 1889–1908 (YSPGGHIAGIQRGIMSERME), 1930–1948 (YLEKSMVLHLHSQRQYIFE), 1949–1969 (FDKNDRLSSVTMPNVARQTLE), 1976–1993 (YYRNIYQPPEGNASVIQD), 1994–2015 (FTEDGHLLHTFYLGTGRRVIYK), 2016–2033 (YGKLSKLAETLYDTTKVS), 2036–2056 (YDETAGMLKTVNLQNEGFTCT), 2059–2079 (YRQIGPLIDRQIFRFTEEGMV), 2087–2106 (YDNSFRVTSMQAVINETPLP), 2112–2129 (YDDVSGKTEQFGKFGVIY), 2130–2156 (YDINQIITTAVMTHTKHFDAYGRMKEV), 2158–2171 (YEIFRSLMYWMTVQ), 2172–2195 (YDNMGRVVKKELKVGPYANTTRYS), 2198–2218 (YDADGQLQTVSINDKPLWRYS), 2219–2239 (YDLNGNLHLLSPGNSARLTPL), 2241–2261 (YDLRDRITRLGDVQYKMDEDG), 2273–2293 (YNSAGLLIKAYNRASGWSVRY), and 2295–2315 (YDGLGRRVSSKSSHSHHLQFF). An N-linked (GlcNAc...) asparagine glycan is attached at Asn-1987. N-linked (GlcNAc...) asparagine glycosylation is present at Asn-2190. Asn-2330 carries an N-linked (GlcNAc...) asparagine glycan. A YD 23 repeat occupies 2341–2382 (YDLQGHLFAMELSSGDEFYIACDNIGTPLAVFSGTGLMIKQI). Asn-2648 carries an N-linked (GlcNAc...) asparagine glycan.

It belongs to the tenascin family. Teneurin subfamily. As to quaternary structure, homodimer; disulfide-linked. May also form heterodimer with either TENM1 or TENM2 or TENM3. As to expression, expressed in brain and spinal cord (at protein level). Expressed in neurons and oligodendrocytes of the spinal cord. Expressed weakly in kidney, lung and spleen. Expressed in the cortex, CA1, CA2 and CA3 of the hippocampus. Expressed in the white matter, Purkinje cells and molecular layer of the cerebellum.

The protein localises to the cell membrane. It localises to the cell projection. It is found in the nucleus. The protein resides in the cytoplasm. Functionally, involved in neural development, regulating the establishment of proper connectivity within the nervous system. Plays a role in the establishment of the anterior-posterior axis during gastrulation. Regulates the differentiation and cellular process formation of oligodendrocytes and myelination of small-diameter axons in the central nervous system (CNS). Promotes activation of focal adhesion kinase. May function as a cellular signal transducer. This is Teneurin-4 (Tenm4) from Mus musculus (Mouse).